A 619-amino-acid polypeptide reads, in one-letter code: Pentatricopeptide repeat-containing protein At3g22470, mitochondrial (619 aa).

The transit peptide at 1–28 directs the protein to the mitochondrion; the sequence is MIQRLIPLNRKASNFTQILEKGTSLLHY. PPR repeat units follow at residues 69–103, 104–138, 139–173, 174–208, 209–243, 244–278, 279–313, 314–348, 349–383, 384–418, 419–453, 454–488, 489–523, 524–558, and 559–593; these read TPID…GIEH, DMYT…GYEP, DTIT…KQRP, DLVT…GFQP, DEVT…NIKA, SVVQ…GIKA, DVVT…NIIP, DVVT…GIAP, DTIT…GCEP, DIVT…GLIP, NTIT…GVPP, SVVT…RMTL, GIGI…GVKP, DVVT…GCTP, and DDFT…GFSA.

The protein belongs to the PPR family. P subfamily.

It localises to the mitochondrion. The sequence is that of Pentatricopeptide repeat-containing protein At3g22470, mitochondrial from Arabidopsis thaliana (Mouse-ear cress).